We begin with the raw amino-acid sequence, 192 residues long: ATP synthase subunit b (192 aa).

A helical transmembrane segment spans residues 7–27; it reads LLLVLGVMLLATGVALAAGGE.

Belongs to the ATPase B chain family. In terms of assembly, F-type ATPases have 2 components, F(1) - the catalytic core - and F(0) - the membrane proton channel. F(1) has five subunits: alpha(3), beta(3), gamma(1), delta(1), epsilon(1). F(0) has three main subunits: a(1), b(2) and c(10-14). The alpha and beta chains form an alternating ring which encloses part of the gamma chain. F(1) is attached to F(0) by a central stalk formed by the gamma and epsilon chains, while a peripheral stalk is formed by the delta and b chains.

The protein resides in the cell inner membrane. In terms of biological role, f(1)F(0) ATP synthase produces ATP from ADP in the presence of a proton or sodium gradient. F-type ATPases consist of two structural domains, F(1) containing the extramembraneous catalytic core and F(0) containing the membrane proton channel, linked together by a central stalk and a peripheral stalk. During catalysis, ATP synthesis in the catalytic domain of F(1) is coupled via a rotary mechanism of the central stalk subunits to proton translocation. Functionally, component of the F(0) channel, it forms part of the peripheral stalk, linking F(1) to F(0). This is ATP synthase subunit b from Oleidesulfovibrio alaskensis (strain ATCC BAA-1058 / DSM 17464 / G20) (Desulfovibrio alaskensis).